The following is a 371-amino-acid chain: 2-oxoadipate dioxygenase/decarboxylase, chloroplastic (371 aa).

The N-terminal 50 residues, 1–50 (MISLHSSAIKASLYGSFPSSLRSTLSVSFSAGSLIRLPSVGKRNLSVVVS), are a transit peptide targeting the chloroplast. The 2-oxoadipate site is built by His113 and Arg117. His113 is a binding site for Fe(2+). His250 provides a ligand contact to Fe(2+). 2 residues coordinate 2-oxoadipate: Gln296 and Tyr320. Residue Glu322 coordinates Fe(2+).

It belongs to the 2-oxoadipate dioxygenase/decarboxylase family. Fe(2+) is required as a cofactor.

Its subcellular location is the plastid. It localises to the chloroplast. It catalyses the reaction 2-oxoadipate + O2 = (R)-2-hydroxyglutarate + CO2. It functions in the pathway amino-acid degradation. In terms of biological role, catalyzes the decarboxylation and hydroxylation of 2-oxoadipate (2OA) to form D-2-hydroxyglutarate (D-2-HGA). Is involved in a D-lysine catabolic pathway. The sequence is that of 2-oxoadipate dioxygenase/decarboxylase, chloroplastic from Arabidopsis thaliana (Mouse-ear cress).